A 235-amino-acid polypeptide reads, in one-letter code: Protein Thf1 (235 aa).

The stretch at 183–204 (DKLNKDLELYRSNLDKMAQALV) forms a coiled coil. The tract at residues 213–235 (DRKKREQRKQQSTAPVAPPSSNE) is disordered. Over residues 222 to 235 (QQSTAPVAPPSSNE) the composition is skewed to polar residues.

This sequence belongs to the THF1 family.

May be involved in photosynthetic membrane biogenesis. In Nostoc punctiforme (strain ATCC 29133 / PCC 73102), this protein is Protein Thf1.